A 428-amino-acid polypeptide reads, in one-letter code: Serine--tRNA ligase (428 aa).

235-237 contacts L-serine; the sequence is TAE. Residue 266–268 coordinates ATP; it reads RSE. Position 289 (Glu-289) interacts with L-serine. Position 353–356 (353–356) interacts with ATP; that stretch reads EISS. Ser-389 provides a ligand contact to L-serine.

This sequence belongs to the class-II aminoacyl-tRNA synthetase family. Type-1 seryl-tRNA synthetase subfamily. As to quaternary structure, homodimer. The tRNA molecule binds across the dimer.

The protein localises to the cytoplasm. The catalysed reaction is tRNA(Ser) + L-serine + ATP = L-seryl-tRNA(Ser) + AMP + diphosphate + H(+). The enzyme catalyses tRNA(Sec) + L-serine + ATP = L-seryl-tRNA(Sec) + AMP + diphosphate + H(+). It functions in the pathway aminoacyl-tRNA biosynthesis; selenocysteinyl-tRNA(Sec) biosynthesis; L-seryl-tRNA(Sec) from L-serine and tRNA(Sec): step 1/1. Its function is as follows. Catalyzes the attachment of serine to tRNA(Ser). Is also able to aminoacylate tRNA(Sec) with serine, to form the misacylated tRNA L-seryl-tRNA(Sec), which will be further converted into selenocysteinyl-tRNA(Sec). The protein is Serine--tRNA ligase of Shewanella denitrificans (strain OS217 / ATCC BAA-1090 / DSM 15013).